The following is a 517-amino-acid chain: Aldehyde dehydrogenase, mitochondrial (517 aa).

Residues 1 to 17 constitute a mitochondrion transit peptide; that stretch reads MLRAAARFGPRLGRRLL. Positions 9–24 match the SIFI-degron motif; that stretch reads GPRLGRRLLSAAATQA. N6-acetyllysine occurs at positions 52, 73, 78, and 159. An NAD(+)-binding site is contributed by 262–267; sequence GSTEIG. The active-site Proton acceptor is the Glu-285. Catalysis depends on Cys-319, which acts as the Nucleophile. N6-acetyllysine is present on residues Lys-368, Lys-383, Lys-426, Lys-428, and Lys-451.

The protein belongs to the aldehyde dehydrogenase family. Homotetramer. In response to mitochondrial stress, the precursor protein is ubiquitinated by the SIFI complex in the cytoplasm before mitochondrial import, leading to its degradation. Within the SIFI complex, UBR4 initiates ubiquitin chain that are further elongated or branched by KCMF1.

The protein resides in the mitochondrion matrix. It catalyses the reaction an aldehyde + NAD(+) + H2O = a carboxylate + NADH + 2 H(+). It functions in the pathway alcohol metabolism; ethanol degradation; acetate from ethanol: step 2/2. Its function is as follows. Required for clearance of cellular formaldehyde, a cytotoxic and carcinogenic metabolite that induces DNA damage. The protein is Aldehyde dehydrogenase, mitochondrial (ALDH2) of Homo sapiens (Human).